The chain runs to 299 residues: Ribosomal protein L11 methyltransferase (299 aa).

S-adenosyl-L-methionine is bound by residues Thr152, Gly172, Asp194, and Asn234.

Belongs to the methyltransferase superfamily. PrmA family.

It localises to the cytoplasm. It carries out the reaction L-lysyl-[protein] + 3 S-adenosyl-L-methionine = N(6),N(6),N(6)-trimethyl-L-lysyl-[protein] + 3 S-adenosyl-L-homocysteine + 3 H(+). Methylates ribosomal protein L11. The protein is Ribosomal protein L11 methyltransferase of Geobacter sulfurreducens (strain ATCC 51573 / DSM 12127 / PCA).